Here is a 215-residue protein sequence, read N- to C-terminus: MGKVYDRFEERLEIQAIADDITSKYVPPHVNIFYCLGGITLTCFLVQVATGFAMTFYYRPTVTEAFASVQYLMTEVNFGWLIRSIHRWSASMMVLMMILHVFRVYLTGGFKKPRELTWVTGVILAVLTVSFGVTGYSLPWDQIGYWAVKIVTGVPEAIPVIGSPLVELLRGSVSVGQSTLTRFYSLHTFILPLLTAVFMPMHFLMIRKQGISGPL.

The helical transmembrane segment at 32–52 threads the bilayer; the sequence is IFYCLGGITLTCFLVQVATGF. Heme c is bound at residue cysteine 35. 2 residues coordinate heme b: histidine 86 and histidine 100. A run of 3 helical transmembrane segments spans residues 90–110, 116–136, and 186–206; these read ASMMVLMMILHVFRVYLTGGF, LTWVTGVILAVLTVSFGVTGY, and LHTFILPLLTAVFMPMHFLMI. 2 residues coordinate heme b: histidine 187 and histidine 202.

It belongs to the cytochrome b family. PetB subfamily. In terms of assembly, the 4 large subunits of the cytochrome b6-f complex are cytochrome b6, subunit IV (17 kDa polypeptide, PetD), cytochrome f and the Rieske protein, while the 4 small subunits are PetG, PetL, PetM and PetN. The complex functions as a dimer. The cofactor is heme b. Heme c serves as cofactor.

The protein localises to the plastid. It is found in the chloroplast thylakoid membrane. Functionally, component of the cytochrome b6-f complex, which mediates electron transfer between photosystem II (PSII) and photosystem I (PSI), cyclic electron flow around PSI, and state transitions. The chain is Cytochrome b6 from Pinus koraiensis (Korean pine).